A 173-amino-acid chain; its full sequence is Eggshell protein (173 aa).

The signal sequence occupies residues 1–18 (MKQSLTLVFLVAIGYATA). A compositionally biased stretch (gly residues) spans 145–162 (GSGKGKGGGKGGKGGKGG). A disordered region spans residues 145–173 (GSGKGKGGGKGGKGGKGGTYKPSHYGGGY).

The sequence is that of Eggshell protein from Schistosoma mansoni (Blood fluke).